We begin with the raw amino-acid sequence, 460 residues long: Tyrosine phenol-lyase (460 aa).

Position 260 is an N6-(pyridoxal phosphate)lysine (Lys-260).

Belongs to the beta-eliminating lyase family. As to quaternary structure, homotetramer. Pyridoxal 5'-phosphate serves as cofactor.

The enzyme catalyses L-tyrosine + H2O = phenol + pyruvate + NH4(+). In Fusobacterium nucleatum subsp. nucleatum (strain ATCC 25586 / DSM 15643 / BCRC 10681 / CIP 101130 / JCM 8532 / KCTC 2640 / LMG 13131 / VPI 4355), this protein is Tyrosine phenol-lyase.